Reading from the N-terminus, the 420-residue chain is Maturation protein A2 (420 aa).

3 RNA-binding regions span residues 158–176 (IKYL…RAVK), 226–236 (QNRHDKIQRLL), and 294–298 (PVSDW).

Belongs to the Leviviricetes maturation protein family. Interacts with host MurA; this interaction inhibits the first step in host cell wall synthesis. Interacts with the capsid protein.

It is found in the virion. In terms of biological role, induces host cell lysis. Inhibits host MurA activity thereby blocking the synthesis of murein precursors necessary for the host cell wall biosynthesis. May be responsible for the attachment to the host pilus. Makes extensive contacts with the viral genome. This chain is Maturation protein A2, found in Escherichia virus Qbeta (Bacteriophage Q-beta).